The sequence spans 116 residues: Large ribosomal subunit protein bL19 (116 aa).

The protein belongs to the bacterial ribosomal protein bL19 family.

This protein is located at the 30S-50S ribosomal subunit interface and may play a role in the structure and function of the aminoacyl-tRNA binding site. The sequence is that of Large ribosomal subunit protein bL19 from Pseudomonas putida (strain ATCC 700007 / DSM 6899 / JCM 31910 / BCRC 17059 / LMG 24140 / F1).